Here is a 179-residue protein sequence, read N- to C-terminus: ATP synthase subunit delta (179 aa).

The protein belongs to the ATPase delta chain family. In terms of assembly, F-type ATPases have 2 components, F(1) - the catalytic core - and F(0) - the membrane proton channel. F(1) has five subunits: alpha(3), beta(3), gamma(1), delta(1), epsilon(1). F(0) has three main subunits: a(1), b(2) and c(10-14). The alpha and beta chains form an alternating ring which encloses part of the gamma chain. F(1) is attached to F(0) by a central stalk formed by the gamma and epsilon chains, while a peripheral stalk is formed by the delta and b chains.

The protein resides in the cell inner membrane. F(1)F(0) ATP synthase produces ATP from ADP in the presence of a proton or sodium gradient. F-type ATPases consist of two structural domains, F(1) containing the extramembraneous catalytic core and F(0) containing the membrane proton channel, linked together by a central stalk and a peripheral stalk. During catalysis, ATP synthesis in the catalytic domain of F(1) is coupled via a rotary mechanism of the central stalk subunits to proton translocation. Its function is as follows. This protein is part of the stalk that links CF(0) to CF(1). It either transmits conformational changes from CF(0) to CF(1) or is implicated in proton conduction. The polypeptide is ATP synthase subunit delta (Acidobacterium capsulatum (strain ATCC 51196 / DSM 11244 / BCRC 80197 / JCM 7670 / NBRC 15755 / NCIMB 13165 / 161)).